A 250-amino-acid polypeptide reads, in one-letter code: 5'/3'-nucleotidase SurE (250 aa).

A divalent metal cation is bound by residues D8, D9, S39, and N92.

The protein belongs to the SurE nucleotidase family. A divalent metal cation is required as a cofactor.

Its subcellular location is the cytoplasm. It carries out the reaction a ribonucleoside 5'-phosphate + H2O = a ribonucleoside + phosphate. It catalyses the reaction a ribonucleoside 3'-phosphate + H2O = a ribonucleoside + phosphate. The enzyme catalyses [phosphate](n) + H2O = [phosphate](n-1) + phosphate + H(+). In terms of biological role, nucleotidase with a broad substrate specificity as it can dephosphorylate various ribo- and deoxyribonucleoside 5'-monophosphates and ribonucleoside 3'-monophosphates with highest affinity to 3'-AMP. Also hydrolyzes polyphosphate (exopolyphosphatase activity) with the preference for short-chain-length substrates (P20-25). Might be involved in the regulation of dNTP and NTP pools, and in the turnover of 3'-mononucleotides produced by numerous intracellular RNases (T1, T2, and F) during the degradation of various RNAs. This Wigglesworthia glossinidia brevipalpis protein is 5'/3'-nucleotidase SurE.